The following is a 437-amino-acid chain: 26S proteasome regulatory subunit 4 homolog (437 aa).

The segment at 1 to 47 is disordered; sequence MGQGVSSGQDKKKKKGSNQKPKYEPPVQSKFGRKKRKGGPATAEKLP. Gly-2 carries the N-myristoyl glycine lipid modification. ATP is bound at residue 223 to 230; sequence GAPGTGKT. Residues Lys-234, Lys-255, and Lys-290 each participate in a glycyl lysine isopeptide (Lys-Gly) (interchain with G-Cter in ubiquitin) cross-link.

The protein belongs to the AAA ATPase family.

It is found in the cytoplasm. Its subcellular location is the nucleus. The 26S proteasome is involved in the ATP-dependent degradation of ubiquitinated proteins. The regulatory (or ATPase) complex confers ATP dependency and substrate specificity to the 26S complex. Has ATPase activity. In Saccharomyces cerevisiae (strain ATCC 204508 / S288c) (Baker's yeast), this protein is 26S proteasome regulatory subunit 4 homolog (RPT2).